The primary structure comprises 181 residues: ATP synthase subunit delta (181 aa).

The protein belongs to the ATPase delta chain family. As to quaternary structure, F-type ATPases have 2 components, F(1) - the catalytic core - and F(0) - the membrane proton channel. F(1) has five subunits: alpha(3), beta(3), gamma(1), delta(1), epsilon(1). F(0) has three main subunits: a(1), b(2) and c(10-14). The alpha and beta chains form an alternating ring which encloses part of the gamma chain. F(1) is attached to F(0) by a central stalk formed by the gamma and epsilon chains, while a peripheral stalk is formed by the delta and b chains.

Its subcellular location is the cell membrane. In terms of biological role, f(1)F(0) ATP synthase produces ATP from ADP in the presence of a proton or sodium gradient. F-type ATPases consist of two structural domains, F(1) containing the extramembraneous catalytic core and F(0) containing the membrane proton channel, linked together by a central stalk and a peripheral stalk. During catalysis, ATP synthesis in the catalytic domain of F(1) is coupled via a rotary mechanism of the central stalk subunits to proton translocation. Functionally, this protein is part of the stalk that links CF(0) to CF(1). It either transmits conformational changes from CF(0) to CF(1) or is implicated in proton conduction. The sequence is that of ATP synthase subunit delta from Clostridioides difficile (strain 630) (Peptoclostridium difficile).